The following is a 466-amino-acid chain: MTLKASEGESGGSMHTALSDLYLEHLLQKRSRPEAVSHPLNTVTEDMYTNGSPAPGSPAQVKGQEVRKVRLIQFEKVTEEPMGITLKLNEKQSCTVARILHGGMIHRQGSLHVGDEILEINGTNVTNHSVDQLQKAMKETKGMISLKVIPNQQSRLPALQMFMRAQFDYDPKKDNLIPCKEAGLKFATGDIIQIINKDDSNWWQGRVEGSSKESAGLIPSPELQEWRVASMAQSAPSEAPSCSPFGKKKKYKDKYLAKHSSIFDQLDVVSYEEVVRLPAFKRKTLVLIGASGVGRSHIKNALLSQNPEKFVYPVPYTTRPPRKSEEDGKEYHFISTEEMTRNISANEFLEFGSYQGNMFGTKFETVHQIHKQNKIAILDIEPQTLKIVRTAELSPFIVFIAPTDQGTQTEALQQLQKDSEAIRSQYAHYFDLSLVNNGVDETLKKLQEAFDQACSSPQWVPVSWVY.

T2 carries the post-translational modification N-acetylthreonine. 2 positions are modified to phosphoserine: S13 and S19. At T49 the chain carries Phosphothreonine. Residues S52, S57, and S110 each carry the phosphoserine modification. A PDZ domain is found at 71–152; that stretch reads LIQFEKVTEE…MISLKVIPNQ (82 aa). One can recognise an SH3 domain in the interval 158 to 228; that stretch reads ALQMFMRAQF…PSPELQEWRV (71 aa). S243 carries the post-translational modification Phosphoserine. Residues 268–466 are interaction with PALS1; that stretch reads VVSYEEVVRL…PQWVPVSWVY (199 aa). Positions 282-451 constitute a Guanylate kinase-like domain; that stretch reads RKTLVLIGAS…TLKKLQEAFD (170 aa).

The protein belongs to the MAGUK family. In terms of assembly, heterodimer with PALS1. Interacts with DLG5 and NF2. Interacts (via guanylate kinase-like domain) with WHRN (via third PDZ domain). Post-translationally, palmitoylated. As to expression, ubiquitous.

The protein resides in the cell membrane. It is found in the cell projection. It localises to the stereocilium. Functionally, essential regulator of neutrophil polarity. Regulates neutrophil polarization by regulating AKT1 phosphorylation through a mechanism that is independent of PIK3CG activity. The protein is 55 kDa erythrocyte membrane protein (MPP1) of Homo sapiens (Human).